We begin with the raw amino-acid sequence, 361 residues long: Queuine tRNA-ribosyltransferase (361 aa).

Aspartate 92 (proton acceptor) is an active-site residue. Residues 92–96 (DSGGF), aspartate 146, glutamine 189, and glycine 216 contribute to the substrate site. Residues 247 to 253 (GVGKPAD) are RNA binding. Aspartate 266 acts as the Nucleophile in catalysis. The interval 271-275 (TRSGR) is RNA binding; important for wobble base 34 recognition. Cysteine 304, cysteine 306, cysteine 309, and histidine 335 together coordinate Zn(2+).

It belongs to the queuine tRNA-ribosyltransferase family. In terms of assembly, homodimer. Within each dimer, one monomer is responsible for RNA recognition and catalysis, while the other monomer binds to the replacement base PreQ1. Zn(2+) is required as a cofactor.

The catalysed reaction is 7-aminomethyl-7-carbaguanine + guanosine(34) in tRNA = 7-aminomethyl-7-carbaguanosine(34) in tRNA + guanine. The protein operates within tRNA modification; tRNA-queuosine biosynthesis. Catalyzes the base-exchange of a guanine (G) residue with the queuine precursor 7-aminomethyl-7-deazaguanine (PreQ1) at position 34 (anticodon wobble position) in tRNAs with GU(N) anticodons (tRNA-Asp, -Asn, -His and -Tyr). Catalysis occurs through a double-displacement mechanism. The nucleophile active site attacks the C1' of nucleotide 34 to detach the guanine base from the RNA, forming a covalent enzyme-RNA intermediate. The proton acceptor active site deprotonates the incoming PreQ1, allowing a nucleophilic attack on the C1' of the ribose to form the product. After dissociation, two additional enzymatic reactions on the tRNA convert PreQ1 to queuine (Q), resulting in the hypermodified nucleoside queuosine (7-(((4,5-cis-dihydroxy-2-cyclopenten-1-yl)amino)methyl)-7-deazaguanosine). This chain is Queuine tRNA-ribosyltransferase, found in Rickettsia rickettsii (strain Iowa).